Reading from the N-terminus, the 298-residue chain is Nucleotide-binding protein GTNG_3015 (298 aa).

17–24 (GMSGAGKT) contacts ATP. 68–71 (DLRS) provides a ligand contact to GTP.

The protein belongs to the RapZ-like family.

Displays ATPase and GTPase activities. This chain is Nucleotide-binding protein GTNG_3015, found in Geobacillus thermodenitrificans (strain NG80-2).